We begin with the raw amino-acid sequence, 167 residues long: Ureidoglycolate lyase (167 aa).

This sequence belongs to the ureidoglycolate lyase family. In terms of assembly, homodimer. Ni(2+) is required as a cofactor.

The catalysed reaction is (S)-ureidoglycolate = urea + glyoxylate. Its pathway is nitrogen metabolism; (S)-allantoin degradation. Its function is as follows. Catalyzes the catabolism of the allantoin degradation intermediate (S)-ureidoglycolate, generating urea and glyoxylate. Involved in the utilization of allantoin as nitrogen source. This chain is Ureidoglycolate lyase, found in Pseudomonas fluorescens (strain SBW25).